A 213-amino-acid chain; its full sequence is uncharacterized protein (213 aa).

The helical transmembrane segment at 22 to 42 threads the bilayer; it reads WFGLSMVSIAVIFGPLTGAHV. The NPA 1 motif lies at 43–45; it reads NPA. 3 helical membrane passes run 63-83, 112-132, and 138-158; these read VYIIAQCIGAFIVALIVWLLF, NLLSEIVTTFSLLFILFTLNH, and GVAMFFVFTGVAGGVMSFGGL. An NPA 2 motif is present at residues 164-166; the sequence is NPA. Residues 188–208 traverse the membrane as a helical segment; that stretch reads FDYAWVPVLRPVIGAILAAWL.

This sequence belongs to the MIP/aquaporin (TC 1.A.8) family.

The protein localises to the cell membrane. This is an uncharacterized protein from Haemophilus influenzae (strain ATCC 51907 / DSM 11121 / KW20 / Rd).